The sequence spans 229 residues: Protein-L-isoaspartate O-methyltransferase (229 aa).

Serine 78 is an active-site residue.

Belongs to the methyltransferase superfamily. L-isoaspartyl/D-aspartyl protein methyltransferase family.

The protein resides in the cytoplasm. The catalysed reaction is [protein]-L-isoaspartate + S-adenosyl-L-methionine = [protein]-L-isoaspartate alpha-methyl ester + S-adenosyl-L-homocysteine. Its function is as follows. Catalyzes the methyl esterification of L-isoaspartyl residues in peptides and proteins that result from spontaneous decomposition of normal L-aspartyl and L-asparaginyl residues. It plays a role in the repair and/or degradation of damaged proteins. The protein is Protein-L-isoaspartate O-methyltransferase of Chromohalobacter salexigens (strain ATCC BAA-138 / DSM 3043 / CIP 106854 / NCIMB 13768 / 1H11).